Consider the following 570-residue polypeptide: MRYSQSFIPTKKETPAEAEVASHQLMLRAGFMRKLSSGVYSYLPYGLAAIRKVENIVREEMNRAGAQEMLMPMVQPADLWKETGRYEKYGPELLRFFDRNNRESCLGPTHEEVITDIVRNELSSYRDLPINLYQIQTKFRDEIRPRFGLMRGREFVMKDAYSFDVDDEQANLSYDKMFEAYKRIFTRCGLQFRPVQADSGAIGGSHSHEFMVLAKTGEDTIVVCKDCEYAANMEKAEVKLVATENDEALAELEKIETPGKRKVNAVCDFLQITPQQLVKTMVFEADGEAVAVLVRGDREVEEVKLKNLLGVADVELMDDKAVFDATGVPTGYLGPVAIPIRVVADQEVMVMKNFYVGGNEKNFHLKNVNIERDCTVSAVADLRQISTDDPCPRCGGRLELTEGIEVGHVFKLGTGYSESMNARFQDGTGDEKPFVMGCYGIGVSRVVAAAIEQNHDKDGIIFPVPLAPYTVTVLNLGLKDPEITAAAEKLYAELQAAGLSVLLDDRDERPGAKFKDADLLGIPYRLTVGKGLAKNGMVEVRRRRDGHTEEMTPEVAADFLARCIQAELTD.

Belongs to the class-II aminoacyl-tRNA synthetase family. ProS type 1 subfamily. Homodimer.

Its subcellular location is the cytoplasm. It carries out the reaction tRNA(Pro) + L-proline + ATP = L-prolyl-tRNA(Pro) + AMP + diphosphate. Functionally, catalyzes the attachment of proline to tRNA(Pro) in a two-step reaction: proline is first activated by ATP to form Pro-AMP and then transferred to the acceptor end of tRNA(Pro). As ProRS can inadvertently accommodate and process non-cognate amino acids such as alanine and cysteine, to avoid such errors it has two additional distinct editing activities against alanine. One activity is designated as 'pretransfer' editing and involves the tRNA(Pro)-independent hydrolysis of activated Ala-AMP. The other activity is designated 'posttransfer' editing and involves deacylation of mischarged Ala-tRNA(Pro). The misacylated Cys-tRNA(Pro) is not edited by ProRS. This chain is Proline--tRNA ligase, found in Desulfotalea psychrophila (strain LSv54 / DSM 12343).